The sequence spans 318 residues: uncharacterized protein (318 aa).

A coiled-coil region spans residues 67-157; it reads LAFDELEKEK…SLKAIQTSQE (91 aa). The interval 172–318 is disordered; that stretch reads ESTNKVEKNA…KGFFARLFNL (147 aa). 2 stretches are compositionally biased toward basic and acidic residues: residues 175–193 and 219–236; these read NKVE…KDSK and KVDK…EKAS. Over residues 237-248 the composition is skewed to polar residues; it reads VEQSKNENAAET. 2 stretches are compositionally biased toward basic and acidic residues: residues 249-274 and 300-310; these read SNKE…HAEA and SEPKPQEEKKG.

This is an uncharacterized protein from Staphylococcus aureus (strain Mu50 / ATCC 700699).